A 657-amino-acid chain; its full sequence is Probable serine/threonine-protein kinase CA_C1728 (657 aa).

The region spanning 10–274 is the Protein kinase domain; it reads YKIEEEIGVG…ELSNVKNNYV (265 aa). Residues 16-24 and Lys-39 contribute to the ATP site; that span reads IGVGGTAVV. Asp-143 acts as the Proton acceptor in catalysis. Residues 286–334 form a disordered region; that stretch reads PAQIQNESNPNNKLDNDDTYYNGEPYNKEQPQEEPQEENEEPKNKIKGN. Residues 288–298 show a composition bias toward polar residues; the sequence is QIQNESNPNNK. 3 consecutive PASTA domains span residues 375–441, 443–509, and 512–577; these read SVSK…DISS, DTDQ…VISR, and EVKK…VIGR. The segment at 581-657 is disordered; it reads TAVQPPNNNN…TNTPNGTGQK (77 aa). Composition is skewed to low complexity over residues 584–600, 613–637, and 645–657; these read QPPNNNNGNGNQNQNQN, PTGGNNDNQNQNNTTNPNGTQPAGG, and GNVTNTPNGTGQK.

The protein belongs to the protein kinase superfamily. Ser/Thr protein kinase family.

The catalysed reaction is L-seryl-[protein] + ATP = O-phospho-L-seryl-[protein] + ADP + H(+). The enzyme catalyses L-threonyl-[protein] + ATP = O-phospho-L-threonyl-[protein] + ADP + H(+). The sequence is that of Probable serine/threonine-protein kinase CA_C1728 from Clostridium acetobutylicum (strain ATCC 824 / DSM 792 / JCM 1419 / IAM 19013 / LMG 5710 / NBRC 13948 / NRRL B-527 / VKM B-1787 / 2291 / W).